The primary structure comprises 317 residues: Aspartate carbamoyltransferase catalytic subunit (317 aa).

Positions 66 and 67 each coordinate carbamoyl phosphate. K94 is an L-aspartate binding site. Residues R116, H144, and Q147 each contribute to the carbamoyl phosphate site. Positions 177 and 231 each coordinate L-aspartate. Carbamoyl phosphate is bound by residues G272 and P273.

The protein belongs to the aspartate/ornithine carbamoyltransferase superfamily. ATCase family. As to quaternary structure, heterododecamer (2C3:3R2) of six catalytic PyrB chains organized as two trimers (C3), and six regulatory PyrI chains organized as three dimers (R2).

The enzyme catalyses carbamoyl phosphate + L-aspartate = N-carbamoyl-L-aspartate + phosphate + H(+). It participates in pyrimidine metabolism; UMP biosynthesis via de novo pathway; (S)-dihydroorotate from bicarbonate: step 2/3. Its function is as follows. Catalyzes the condensation of carbamoyl phosphate and aspartate to form carbamoyl aspartate and inorganic phosphate, the committed step in the de novo pyrimidine nucleotide biosynthesis pathway. This Nitrobacter hamburgensis (strain DSM 10229 / NCIMB 13809 / X14) protein is Aspartate carbamoyltransferase catalytic subunit.